Here is a 366-residue protein sequence, read N- to C-terminus: tRNA/tmRNA (uracil-C(5))-methyltransferase (366 aa).

Q190, Y218, N223, E239, and D299 together coordinate S-adenosyl-L-methionine. Residue C324 is the Nucleophile of the active site. The Proton acceptor role is filled by E358.

The protein belongs to the class I-like SAM-binding methyltransferase superfamily. RNA M5U methyltransferase family. TrmA subfamily.

It carries out the reaction uridine(54) in tRNA + S-adenosyl-L-methionine = 5-methyluridine(54) in tRNA + S-adenosyl-L-homocysteine + H(+). It catalyses the reaction uridine(341) in tmRNA + S-adenosyl-L-methionine = 5-methyluridine(341) in tmRNA + S-adenosyl-L-homocysteine + H(+). Dual-specificity methyltransferase that catalyzes the formation of 5-methyluridine at position 54 (m5U54) in all tRNAs, and that of position 341 (m5U341) in tmRNA (transfer-mRNA). The protein is tRNA/tmRNA (uracil-C(5))-methyltransferase of Enterobacter sp. (strain 638).